Here is a 405-residue protein sequence, read N- to C-terminus: SPbeta prophage-derived uncharacterized protein YomR (405 aa).

A coiled-coil region spans residues 9 to 36; that stretch reads QLKQNNIQINSLRGSNDRAEKHMLEHEQ.

The protein is SPbeta prophage-derived uncharacterized protein YomR (yomR) of Bacillus subtilis (strain 168).